The sequence spans 425 residues: Protein cab-1 (425 aa).

Positions methionine 1–alanine 11 are enriched in basic and acidic residues. 2 disordered regions span residues methionine 1 to lysine 20 and leucine 214 to lysine 251. The tract at residues glutamate 205 to glutamine 424 is AEX-3-binding. Residues leucine 300–glycine 320 traverse the membrane as a helical segment. Residues aspartate 334 to lysine 355 are disordered.

This sequence belongs to the NPDC1/cab-1 family. Binds to the RAB3 GDP/GTP exchange factor aex-3. Expressed in a variety of neurons.

Its subcellular location is the membrane. The chain is Protein cab-1 (cab-1) from Caenorhabditis elegans.